The following is a 649-amino-acid chain: Golgin subfamily A member 6-like protein 26 (649 aa).

Disordered regions lie at residues 1–94 (MWPQ…HQEA), 300–330 (QEEK…RQEE), 358–440 (EKMH…EMWR), 455–572 (KEKM…REQE), and 584–620 (EQEE…MRRQ). Over residues 10-23 (HPHLPTHPHLPTHP) the composition is skewed to low complexity. Positions 25-46 (MSKETRQSKLAEAKEQLTDHHP) are enriched in basic and acidic residues. 2 stretches are compositionally biased toward polar residues: residues 47 to 57 (QTNPSVGTAAS) and 65 to 77 (NNGT…TSGG). Residues 80 to 94 (SPEDEQKASHQHQEA) are compositionally biased toward basic and acidic residues. Residues 151 to 644 (LEQALSAVAT…EEKMQEHQEH (494 aa)) are a coiled coil.

The protein belongs to the GOLGA6 family.

The sequence is that of Golgin subfamily A member 6-like protein 26 (GOLGA6L26) from Homo sapiens (Human).